The sequence spans 217 residues: GTP cyclohydrolase 1 (217 aa).

Positions 109, 112, and 180 each coordinate Zn(2+).

Belongs to the GTP cyclohydrolase I family. In terms of assembly, toroid-shaped homodecamer, composed of two pentamers of five dimers.

The enzyme catalyses GTP + H2O = 7,8-dihydroneopterin 3'-triphosphate + formate + H(+). Its pathway is cofactor biosynthesis; 7,8-dihydroneopterin triphosphate biosynthesis; 7,8-dihydroneopterin triphosphate from GTP: step 1/1. This Vibrio vulnificus (strain CMCP6) protein is GTP cyclohydrolase 1.